We begin with the raw amino-acid sequence, 345 residues long: Tubulin-folding cofactor C (345 aa).

Position 1 is an N-acetylmethionine (Met-1). Over residues 1–10 (MEDDGQSSVA) the composition is skewed to polar residues. The segment at 1-83 (MEDDGQSSVA…SRLASSSTDS (83 aa)) is disordered. Residues 23 to 39 (DMLERLSARHQARKSDS) show a composition bias toward basic and acidic residues. Over residues 40-55 (PDSSSSSSSTLESTSS) the composition is skewed to low complexity. The segment covering 61-73 (SDSKRSIESRIAE) has biased composition (basic and acidic residues). Over residues 74 to 83 (SRLASSSTDS) the composition is skewed to low complexity. Positions 169–318 (PPKLVPVRDS…NWANVDDFRW (150 aa)) constitute a C-CAP/cofactor C-like domain.

Belongs to the TBCC family. In terms of assembly, supercomplex made of cofactors A to E. Cofactors A and D function by capturing and stabilizing tubulin in a quasi-native conformation. Cofactor E binds to the cofactor D-tubulin complex; interaction with cofactor C then causes the release of tubulin polypeptides that are committed to the native state. As to expression, ubiquitously expressed (at protein level). Present in leaves, roots, flowers, and stems.

The protein resides in the cytoplasm. Functionally, essential tubulin-folding protein involved in the final step of the tubulin folding pathway. Required for continuous microtubule cytoskeleton organization, mitotic division, cytokinesis, and to couple cell cycle progression to cell division in embryos and endosperms. Not essential for cell viability. Binds probably to the multimeric supercomplex, stimulating GTP hydrolysis by the bound beta-tubulin and the release of the alpha-/beta-tubulin heterodimer. This Arabidopsis thaliana (Mouse-ear cress) protein is Tubulin-folding cofactor C (TFCC).